The sequence spans 311 residues: 1D-myo-inositol 2-acetamido-2-deoxy-alpha-D-glucopyranoside deacetylase (311 aa).

Residues His29, Asp32, and His162 each contribute to the Zn(2+) site.

This sequence belongs to the MshB deacetylase family. Zn(2+) is required as a cofactor.

The enzyme catalyses 1D-myo-inositol 2-acetamido-2-deoxy-alpha-D-glucopyranoside + H2O = 1D-myo-inositol 2-amino-2-deoxy-alpha-D-glucopyranoside + acetate. Catalyzes the deacetylation of 1D-myo-inositol 2-acetamido-2-deoxy-alpha-D-glucopyranoside (GlcNAc-Ins) in the mycothiol biosynthesis pathway. The protein is 1D-myo-inositol 2-acetamido-2-deoxy-alpha-D-glucopyranoside deacetylase of Corynebacterium efficiens (strain DSM 44549 / YS-314 / AJ 12310 / JCM 11189 / NBRC 100395).